The primary structure comprises 638 residues: LIM domain kinase 2 (638 aa).

2 consecutive LIM zinc-binding domains span residues 12–63 and 72–124; these read CRGC…CHKD and CHGC…CGKC. One can recognise a PDZ domain in the interval 152–239; the sequence is LISMPATTEC…TLQLLIEHDP (88 aa). The residue at position 210 (threonine 210) is a Phosphothreonine. Over residues 257–266 the composition is skewed to polar residues; that stretch reads MQSSGHTLML. Positions 257–304 are disordered; that stretch reads MQSSGHTLMLSTLDAKENQEGTLRRRSLRRSNSISKSPGPSSPKEPLL. Basic and acidic residues predominate over residues 270-279; the sequence is DAKENQEGTL. Over residues 286 to 304 the composition is skewed to low complexity; it reads RSNSISKSPGPSSPKEPLL. Phosphoserine occurs at positions 293 and 298. In terms of domain architecture, Protein kinase spans 331–608; it reads LIHGEVLGKG…DSFEALSLFL (278 aa). ATP is bound by residues 337–345 and lysine 360; that span reads LGKGFFGQA. The active site involves aspartate 451. Threonine 505 carries the post-translational modification Phosphothreonine; by ROCK1 and CDC42BP.

It belongs to the protein kinase superfamily. TKL Ser/Thr protein kinase family. As to quaternary structure, binds ROCK1 and MARF1. Interacts with NISCH. In terms of processing, phosphorylated on serine and/or threonine residues by ROCK1. In terms of tissue distribution, found in various tissues at moderate levels, except for testis, which shows very low expression.

It localises to the cytoplasm. It is found in the nucleus. The protein resides in the perinuclear region. The protein localises to the cytoskeleton. Its subcellular location is the spindle. It localises to the microtubule organizing center. It is found in the centrosome. It carries out the reaction L-seryl-[protein] + ATP = O-phospho-L-seryl-[protein] + ADP + H(+). It catalyses the reaction L-threonyl-[protein] + ATP = O-phospho-L-threonyl-[protein] + ADP + H(+). In terms of biological role, serine/threonine-protein kinase that plays an essential role in the regulation of actin filament dynamics. Acts downstream of several Rho family GTPase signal transduction pathways. Involved in astral microtubule organization and mitotic spindle orientation during early stages of mitosis by mediating phosphorylation of TPPP. Displays serine/threonine-specific phosphorylation of myelin basic protein and histone (MBP) in vitro. Suppresses ciliogenesis via multiple pathways; phosphorylation of CFL1, directional trafficking of ciliary vesicles to the ciliary base, and by facilitating YAP1 nuclear localization where it acts as a transcriptional corepressor of the TEAD4 target genes AURKA and PLK1. The chain is LIM domain kinase 2 (Limk2) from Rattus norvegicus (Rat).